Consider the following 458-residue polypeptide: Repulsive guidance molecule A (458 aa).

A signal peptide spans 1–53 (MGGPGPRRAGTSRERLVVTGRAGWMGMGRGAGRSALGFWPTLAFLLCSFPAAT). Residues 54-176 (SPCKILKCNS…NYTHCGLFGD (123 aa)) constitute a propeptide, removed in mature form. The span at 121–133 (HNCSKDGPTSQPR) shows a compositional bias: polar residues. The disordered stretch occupies residues 121-149 (HNCSKDGPTSQPRLHTLPPAGDSQERSDS). N122 and N167 each carry an N-linked (GlcNAc...) asparagine glycan. Disulfide bonds link C153–C234 and C171–C323. N-linked (GlcNAc...) asparagine glycosylation occurs at N397. A lipid anchor (GPI-anchor amidated alanine) is attached at A433. Residues 434–458 (AGLPLAPQPLLGALILLLALFPVFC) constitute a propeptide, removed in mature form.

The protein belongs to the repulsive guidance molecule (RGM) family. Interacts with NEO1, BMP2 and BMP4. Autocatalytically cleaved at low pH; the two chains remain linked via two disulfide bonds.

The protein resides in the cell membrane. In terms of biological role, member of the repulsive guidance molecule (RGM) family that performs several functions in the developing and adult nervous system. Regulates cephalic neural tube closure, inhibits neurite outgrowth and cortical neuron branching, and the formation of mature synapses. Binding to its receptor NEO1/neogenin induces activation of RHOA-ROCK1/Rho-kinase signaling pathway through UNC5B-ARHGEF12/LARG-PTK2/FAK1 cascade, leading to collapse of the neuronal growth cone and neurite outgrowth inhibition. Furthermore, RGMA binding to NEO1/neogenin leads to HRAS inactivation by influencing HRAS-PTK2/FAK1-AKT1 pathway. It also functions as a bone morphogenetic protein (BMP) coreceptor that may signal through SMAD1, SMAD5, and SMAD8. The polypeptide is Repulsive guidance molecule A (RGMA) (Macaca fascicularis (Crab-eating macaque)).